A 424-amino-acid chain; its full sequence is Enolase (424 aa).

Gln162 serves as a coordination point for (2R)-2-phosphoglycerate. Glu204 acts as the Proton donor in catalysis. Positions 241, 284, and 311 each coordinate Mg(2+). Lys336, Arg365, Ser366, and Lys387 together coordinate (2R)-2-phosphoglycerate. Lys336 functions as the Proton acceptor in the catalytic mechanism.

The protein belongs to the enolase family. Mg(2+) is required as a cofactor.

The protein localises to the cytoplasm. It is found in the secreted. It localises to the cell surface. The catalysed reaction is (2R)-2-phosphoglycerate = phosphoenolpyruvate + H2O. It participates in carbohydrate degradation; glycolysis; pyruvate from D-glyceraldehyde 3-phosphate: step 4/5. In terms of biological role, catalyzes the reversible conversion of 2-phosphoglycerate (2-PG) into phosphoenolpyruvate (PEP). It is essential for the degradation of carbohydrates via glycolysis. In Sinorhizobium medicae (strain WSM419) (Ensifer medicae), this protein is Enolase.